Reading from the N-terminus, the 178-residue chain is uncharacterized protein (178 aa).

Residues 9 to 173 enclose the N-acetyltransferase domain; it reads LTLRKMELED…IDVYMFSLLK (165 aa).

This is an uncharacterized protein from Bacillus licheniformis.